A 152-amino-acid chain; its full sequence is Deoxyuridine 5'-triphosphate nucleotidohydrolase (152 aa).

Substrate contacts are provided by residues Arg-71–Gly-73, Asn-84, Leu-88–Asp-90, and Met-98.

The protein belongs to the dUTPase family. It depends on Mg(2+) as a cofactor.

The enzyme catalyses dUTP + H2O = dUMP + diphosphate + H(+). The protein operates within pyrimidine metabolism; dUMP biosynthesis; dUMP from dCTP (dUTP route): step 2/2. In terms of biological role, this enzyme is involved in nucleotide metabolism: it produces dUMP, the immediate precursor of thymidine nucleotides and it decreases the intracellular concentration of dUTP so that uracil cannot be incorporated into DNA. This Shewanella sediminis (strain HAW-EB3) protein is Deoxyuridine 5'-triphosphate nucleotidohydrolase.